Consider the following 81-residue polypeptide: Sulfur carrier protein TusA (81 aa).

The active-site Cysteine persulfide intermediate is the C19.

This sequence belongs to the sulfur carrier protein TusA family.

Its subcellular location is the cytoplasm. Sulfur carrier protein which probably makes part of a sulfur-relay system. This is Sulfur carrier protein TusA from Shewanella baltica (strain OS185).